The following is a 576-amino-acid chain: Polyphenol oxidase 3 (576 aa).

6 residues coordinate Cu cation: His-61, His-85, His-94, His-259, His-263, and His-296. Positions 83–85 (CTH) form a cross-link, 2'-(S-cysteinyl)-histidine (Cys-His). His-263 contacts substrate. A propeptide spans 393-576 (FVTTQTENPA…ILDDIIHRVN (184 aa)) (removed in mature form).

It belongs to the tyrosinase family. In terms of assembly, tetramer composed of two subunits of PPO3 (H subunits) and two subunits of the as yet uncharacterized product of ORF239342 (L subunits). Requires Cu(2+) as cofactor. In terms of processing, the C-ter is probably cleaved after Gly-392 since the mature active protein is smaller than the protein encoded by the gene.

It catalyses the reaction 2 L-dopa + O2 = 2 L-dopaquinone + 2 H2O. The enzyme catalyses L-tyrosine + O2 = L-dopaquinone + H2O. In terms of biological role, copper-containing oxidase that catalyzes both the o-hydroxylation of monophenols and the subsequent oxidation of the resulting o-diphenols into reactive o-quinones, which evolve spontaneously to produce intermediates, which associate in dark brown pigments. Involved in the initial step of melanin synthesis. Melanins constitute a mechanism of defense and resistance to stress such as UV radiations, free radicals, gamma rays, dehydratation and extreme temperatures, and contribute to the fungal cell-wall resistance against hydrolytic enzymes in avoiding cellular lysis. Fungal pigments are also involved in the formation and stability of spores. The polypeptide is Polyphenol oxidase 3 (PPO3) (Agaricus bisporus (White button mushroom)).